Consider the following 265-residue polypeptide: MQPDLHCRTLAAHTLKHFRALSPLTHCMTNDVVQTFTANTLLALGASPAMVIDPVEARPFAAIANALLINVGTLTASRADAMRAAVESAYDAKTPWTLDPVAVGVLEFRRRFCLDLLSLRPAAIRGNASEILALAGMALGGRGVDTTEAALAALPAAQALARQIDCIVVVTGEIDYVTNSQRTLSIPGGDPLMTRIVGTGCALSAVVAASCALPGAALDNVASACCWMKLAGQAAAERSEGPGSFIPAFLDALYHLDVEAANATN.

Methionine 50 contributes to the substrate binding site. Residues arginine 125 and threonine 171 each contribute to the ATP site. Glycine 198 contributes to the substrate binding site.

It belongs to the Thz kinase family. Mg(2+) is required as a cofactor.

It carries out the reaction 5-(2-hydroxyethyl)-4-methylthiazole + ATP = 4-methyl-5-(2-phosphooxyethyl)-thiazole + ADP + H(+). It participates in cofactor biosynthesis; thiamine diphosphate biosynthesis; 4-methyl-5-(2-phosphoethyl)-thiazole from 5-(2-hydroxyethyl)-4-methylthiazole: step 1/1. Functionally, catalyzes the phosphorylation of the hydroxyl group of 4-methyl-5-beta-hydroxyethylthiazole (THZ). The protein is Hydroxyethylthiazole kinase of Salmonella paratyphi A (strain ATCC 9150 / SARB42).